The following is a 263-amino-acid chain: Splicing regulator sde2 (263 aa).

Positions 1 to 84 (MECKTVFLNG…LTLCTRVLGG (84 aa)) are cleaved as a propeptide — UBL. Disordered regions lie at residues 95 to 118 (AGGRMSKKRNEQENQDSCRDLDGN), 137 to 158 (PAETRAKKEAKKQKLNKVLAAD), and 194 to 263 (STSA…LYGL). Residues 102–117 (KRNEQENQDSCRDLDG) are compositionally biased toward basic and acidic residues. Composition is skewed to low complexity over residues 194–209 (STSASSFSSGSNGATT) and 219–230 (NNNSSINSWSRR).

This sequence belongs to the SDE2 family. As to quaternary structure, interacts with cay1/cactin. Interacts with prp19. Interacts with cwf12. Interacts with cdc5. The N-terminal UBL (ubiquitin-like) propeptide is cleaved at Gly-84 by the deubiquitinating enzymes ubp5 and ubp15; the resulting mature sde2 associates with spliceosomes. In terms of processing, polyubiquitinated; ubiquitination is partially dependent on ubr11.

Its subcellular location is the cytoplasm. It is found in the nucleus. Plays a role in pre-mRNA splicing by facilitating excision of introns featuring relatively long (&gt;21 nucleotides) spacing between the branchpoint and 3'-splice site (ss). Recruits cactin to the spliceosome which may enable folding of RNA between the branchpoint and 3'-ss, to guide the splice site towards the spliceosome's catalytic center. Required for proper chromatin organization by assisting splicing of components involved in genomic stability and telomere organization. This chain is Splicing regulator sde2, found in Schizosaccharomyces pombe (strain 972 / ATCC 24843) (Fission yeast).